Consider the following 256-residue polypeptide: Ribosomal RNA small subunit methyltransferase J (256 aa).

Residues 101 to 102, 117 to 118, and Asp-174 each bind S-adenosyl-L-methionine; these read RD and ER.

The protein belongs to the methyltransferase superfamily. RsmJ family.

The protein localises to the cytoplasm. The catalysed reaction is guanosine(1516) in 16S rRNA + S-adenosyl-L-methionine = N(2)-methylguanosine(1516) in 16S rRNA + S-adenosyl-L-homocysteine + H(+). Its function is as follows. Specifically methylates the guanosine in position 1516 of 16S rRNA. The sequence is that of Ribosomal RNA small subunit methyltransferase J from Chromohalobacter salexigens (strain ATCC BAA-138 / DSM 3043 / CIP 106854 / NCIMB 13768 / 1H11).